Consider the following 129-residue polypeptide: MAAKKTARKRRVKKHVESGVAHIHSTFNNTLVMITDVQGNAVAWSSAGALGFKGSRKSTPFAAQMAAEAAAKSAMDQGMKHVEVSVKGPGAGREAAIRALQAAGLEITAIRDVTPVPHNGSRPPKRRRV.

Belongs to the universal ribosomal protein uS11 family. As to quaternary structure, part of the 30S ribosomal subunit. Interacts with proteins S7 and S18. Binds to IF-3.

Functionally, located on the platform of the 30S subunit, it bridges several disparate RNA helices of the 16S rRNA. Forms part of the Shine-Dalgarno cleft in the 70S ribosome. This chain is Small ribosomal subunit protein uS11, found in Lactobacillus gasseri (strain ATCC 33323 / DSM 20243 / BCRC 14619 / CIP 102991 / JCM 1131 / KCTC 3163 / NCIMB 11718 / NCTC 13722 / AM63).